Consider the following 418-residue polypeptide: MSEQQEQEQSDKQKYEFRKVIEELKGYQGSGTQLVSIYIPEGKLISDVVAHVTQEHSEASNIKSKDTRTAVQDALTSIKDRLRYYDVRPPDNGLVVFSGAFDTGGGRTDMVTKVLESPPDPIESFRYHCDSEFLTEPLEHMLADKGLFGLIVLDRREANVGWLKGKRVEPVKSASSLVPGKQRKGGQSAQRFARLRLEAIDNFYQEVAGMANDLFVADRHEIDGILVGGPSPTKDEFLDGDYLHHELQDMVLGKFDVAYTDESGLYDLVDAADDVLAEHEMLRDKELMEDFFKQLHNGDKATYGFDQTRQNLNMGAVEQLLISEDLRKDVVAYTCENGHDEYDLINSSAGTDDHECSRCGATVDADDGEREDAIDHLMELADQRGTETVFISTDFEKGEQLLTAFGGVAGLLRYSTGV.

Belongs to the eukaryotic release factor 1 family. As to quaternary structure, heterodimer of two subunits, one of which binds GTP.

It is found in the cytoplasm. Functionally, directs the termination of nascent peptide synthesis (translation) in response to the termination codons UAA, UAG and UGA. The chain is Peptide chain release factor subunit 1 from Haloarcula marismortui (strain ATCC 43049 / DSM 3752 / JCM 8966 / VKM B-1809) (Halobacterium marismortui).